The following is a 157-amino-acid chain: 2-C-methyl-D-erythritol 2,4-cyclodiphosphate synthase (157 aa).

Asp-8 and His-10 together coordinate a divalent metal cation. 4-CDP-2-C-methyl-D-erythritol 2-phosphate is bound by residues 8–10 (DVH) and 34–35 (HS). His-42 serves as a coordination point for a divalent metal cation. 4-CDP-2-C-methyl-D-erythritol 2-phosphate-binding positions include 56-58 (DIG), 61-65 (FPDTD), 100-106 (AQRPKMA), 132-135 (TTEE), and Phe-139.

The protein belongs to the IspF family. Homotrimer. A divalent metal cation serves as cofactor.

The enzyme catalyses 4-CDP-2-C-methyl-D-erythritol 2-phosphate = 2-C-methyl-D-erythritol 2,4-cyclic diphosphate + CMP. It functions in the pathway isoprenoid biosynthesis; isopentenyl diphosphate biosynthesis via DXP pathway; isopentenyl diphosphate from 1-deoxy-D-xylulose 5-phosphate: step 4/6. Its function is as follows. Involved in the biosynthesis of isopentenyl diphosphate (IPP) and dimethylallyl diphosphate (DMAPP), two major building blocks of isoprenoid compounds. Catalyzes the conversion of 4-diphosphocytidyl-2-C-methyl-D-erythritol 2-phosphate (CDP-ME2P) to 2-C-methyl-D-erythritol 2,4-cyclodiphosphate (ME-CPP) with a corresponding release of cytidine 5-monophosphate (CMP). The protein is 2-C-methyl-D-erythritol 2,4-cyclodiphosphate synthase of Trichlorobacter lovleyi (strain ATCC BAA-1151 / DSM 17278 / SZ) (Geobacter lovleyi).